A 310-amino-acid chain; its full sequence is Proline dehydrogenase (310 aa).

K98 lines the substrate pocket. D135 is a catalytic residue. Residues M136, Q166, 187–192, 229–230, and 292–295 contribute to the FAD site; these read RMVKGA, TH, and RIAE. R187 is an active-site residue. 291-292 contributes to the substrate binding site; it reads RR.

Belongs to the proline dehydrogenase family. FAD serves as cofactor.

The catalysed reaction is L-proline + a quinone = (S)-1-pyrroline-5-carboxylate + a quinol + H(+). Its pathway is amino-acid degradation; L-proline degradation into L-glutamate; L-glutamate from L-proline: step 1/2. Converts proline to delta-1-pyrroline-5-carboxylate. This Deinococcus radiodurans (strain ATCC 13939 / DSM 20539 / JCM 16871 / CCUG 27074 / LMG 4051 / NBRC 15346 / NCIMB 9279 / VKM B-1422 / R1) protein is Proline dehydrogenase.